The primary structure comprises 147 residues: Nucleoside diphosphate kinase (147 aa).

ATP-binding residues include Lys-9, Phe-57, Arg-85, Thr-91, Arg-102, and Asn-112. The active-site Pros-phosphohistidine intermediate is the His-115.

It belongs to the NDK family. As to quaternary structure, homotetramer. Requires Mg(2+) as cofactor.

The protein localises to the cytoplasm. The enzyme catalyses a 2'-deoxyribonucleoside 5'-diphosphate + ATP = a 2'-deoxyribonucleoside 5'-triphosphate + ADP. The catalysed reaction is a ribonucleoside 5'-diphosphate + ATP = a ribonucleoside 5'-triphosphate + ADP. In terms of biological role, major role in the synthesis of nucleoside triphosphates other than ATP. The ATP gamma phosphate is transferred to the NDP beta phosphate via a ping-pong mechanism, using a phosphorylated active-site intermediate. The sequence is that of Nucleoside diphosphate kinase from Listeria monocytogenes serotype 4b (strain F2365).